We begin with the raw amino-acid sequence, 312 residues long: Type II methyltransferase M.NgoMIV (312 aa).

One can recognise an SAM-dependent MTase C5-type domain in the interval 3-311 (FTSLEICAGA…RQIIKALKKE (309 aa)). Residue C74 is part of the active site.

This sequence belongs to the class I-like SAM-binding methyltransferase superfamily. C5-methyltransferase family.

The enzyme catalyses a 2'-deoxycytidine in DNA + S-adenosyl-L-methionine = a 5-methyl-2'-deoxycytidine in DNA + S-adenosyl-L-homocysteine + H(+). A methylase, recognizes the double-stranded sequence 5'-GCCGGC-3', methylates C-2 on both strands, and protects the DNA from cleavage by the NgoMIV endonuclease. The chain is Type II methyltransferase M.NgoMIV (ngoMIVM) from Neisseria gonorrhoeae.